The primary structure comprises 90 residues: Small ribosomal subunit protein uS15c (90 aa).

Belongs to the universal ribosomal protein uS15 family. As to quaternary structure, part of the 30S ribosomal subunit.

The protein localises to the plastid. The protein resides in the chloroplast. This Manihot esculenta (Cassava) protein is Small ribosomal subunit protein uS15c (rps15).